We begin with the raw amino-acid sequence, 338 residues long: Calcium uniporter protein 4, mitochondrial (338 aa).

The N-terminal 36 residues, 1 to 36, are a transit peptide targeting the mitochondrion; that stretch reads MVMMKKLLSNRLFNMSKTASQSLMNCRTSSSSSLAM. Residues 233–253 form a helical membrane-spanning segment; that stretch reads LWAGLGYLIIQTAGFMRLTFW. Positions 257-265 match the Selectivity filter motif; sequence WDVMEPICF. Glu261 contributes to the Ca(2+) binding site. Residues 263–280 traverse the membrane as a helical segment; the sequence is ICFYVSSVYFMAGYTFFL.

The protein belongs to the MCU (TC 1.A.77) family.

The protein resides in the mitochondrion inner membrane. The enzyme catalyses Ca(2+)(in) = Ca(2+)(out). In terms of biological role, mitochondrial inner membrane calcium uniporter that mediates calcium uptake into mitochondria. Constitutes a pore-forming and calcium-conducting subunit. Mitochondrial calcium homeostasis plays key roles in cellular physiology and regulates cell bioenergetics, cytoplasmic calcium signals and activation of cell death pathways. In Arabidopsis thaliana (Mouse-ear cress), this protein is Calcium uniporter protein 4, mitochondrial.